The primary structure comprises 159 residues: Ribosomal RNA large subunit methyltransferase H (159 aa).

S-adenosyl-L-methionine-binding positions include Leu76, Gly108, and 127–132 (FSKMTF).

This sequence belongs to the RNA methyltransferase RlmH family. Homodimer.

It is found in the cytoplasm. It catalyses the reaction pseudouridine(1915) in 23S rRNA + S-adenosyl-L-methionine = N(3)-methylpseudouridine(1915) in 23S rRNA + S-adenosyl-L-homocysteine + H(+). In terms of biological role, specifically methylates the pseudouridine at position 1915 (m3Psi1915) in 23S rRNA. The sequence is that of Ribosomal RNA large subunit methyltransferase H from Staphylococcus saprophyticus subsp. saprophyticus (strain ATCC 15305 / DSM 20229 / NCIMB 8711 / NCTC 7292 / S-41).